Here is a 380-residue protein sequence, read N- to C-terminus: Cytochrome b (380 aa).

4 consecutive transmembrane segments (helical) span residues 34-54, 78-99, 114-134, and 179-199; these read FGSL…LLAM, WLIR…FLHI, WNTG…GYVL, and FFAL…THLM. The heme b site is built by His84 and His98. Residues His183 and His197 each contribute to the heme b site. His202 provides a ligand contact to a ubiquinone. 4 helical membrane passes run 227 to 247, 289 to 309, 321 to 341, and 348 to 368; these read LKDI…ALFS, LGGV…PFLH, LSQA…WVGS, and FIII…ILFP.

It belongs to the cytochrome b family. As to quaternary structure, the cytochrome bc1 complex contains 11 subunits: 3 respiratory subunits (MT-CYB, CYC1 and UQCRFS1), 2 core proteins (UQCRC1 and UQCRC2) and 6 low-molecular weight proteins (UQCRH/QCR6, UQCRB/QCR7, UQCRQ/QCR8, UQCR10/QCR9, UQCR11/QCR10 and a cleavage product of UQCRFS1). This cytochrome bc1 complex then forms a dimer. Heme b is required as a cofactor.

Its subcellular location is the mitochondrion inner membrane. Functionally, component of the ubiquinol-cytochrome c reductase complex (complex III or cytochrome b-c1 complex) that is part of the mitochondrial respiratory chain. The b-c1 complex mediates electron transfer from ubiquinol to cytochrome c. Contributes to the generation of a proton gradient across the mitochondrial membrane that is then used for ATP synthesis. This chain is Cytochrome b (MT-CYB), found in Syrmaticus reevesii (Reeves's pheasant).